The chain runs to 344 residues: L-threonine 3-dehydrogenase (344 aa).

Cys42 lines the Zn(2+) pocket. Residues Thr44 and His47 each act as charge relay system in the active site. 6 residues coordinate Zn(2+): His67, Glu68, Cys97, Cys100, Cys103, and Cys111. NAD(+) is bound by residues Ile179, Asp199, Arg204, 266-268, and 290-291; these read LGI and IY.

It belongs to the zinc-containing alcohol dehydrogenase family. In terms of assembly, homotetramer. It depends on Zn(2+) as a cofactor.

The protein resides in the cytoplasm. It carries out the reaction L-threonine + NAD(+) = (2S)-2-amino-3-oxobutanoate + NADH + H(+). It participates in amino-acid degradation; L-threonine degradation via oxydo-reductase pathway; glycine from L-threonine: step 1/2. Catalyzes the NAD(+)-dependent oxidation of L-threonine to 2-amino-3-ketobutyrate. The polypeptide is L-threonine 3-dehydrogenase (Sinorhizobium medicae (strain WSM419) (Ensifer medicae)).